The primary structure comprises 855 residues: Protein translocase subunit SecA (855 aa).

ATP is bound by residues Q88, G106–T110, and D509. A disordered region spans residues E815 to G837. 4 residues coordinate Zn(2+): C832, C834, C843, and C844.

This sequence belongs to the SecA family. Monomer and homodimer. Part of the essential Sec protein translocation apparatus which comprises SecA, SecYEG and auxiliary proteins SecDF-YajC and YidC. Zn(2+) serves as cofactor.

It localises to the cell inner membrane. It is found in the cytoplasm. The catalysed reaction is ATP + H2O + cellular proteinSide 1 = ADP + phosphate + cellular proteinSide 2.. In terms of biological role, part of the Sec protein translocase complex. Interacts with the SecYEG preprotein conducting channel. Has a central role in coupling the hydrolysis of ATP to the transfer of proteins into and across the cell membrane, serving as an ATP-driven molecular motor driving the stepwise translocation of polypeptide chains across the membrane. In Campylobacter fetus subsp. fetus (strain 82-40), this protein is Protein translocase subunit SecA.